Here is a 72-residue protein sequence, read N- to C-terminus: Prokaryotic ubiquitin-like protein Pup (72 aa).

Residues 1–10 (MATRDSGGGQ) are compositionally biased toward gly residues. The interval 1–41 (MATRDSGGGQQHTNRHADEVEEVAAEGNDASDLKERHEKLS) is disordered. A coiled-coil region spans residues 21-61 (EEVAAEGNDASDLKERHEKLSEDVDSLLDEIDDVLEENAEE). The tract at residues 28–66 (NDASDLKERHEKLSEDVDSLLDEIDDVLEENAEEFVKGY) is ARC ATPase binding. Basic and acidic residues predominate over residues 31 to 41 (SDLKERHEKLS). Glutamate 72 is covalently cross-linked (Isoglutamyl lysine isopeptide (Glu-Lys) (interchain with K-? in acceptor proteins)).

This sequence belongs to the prokaryotic ubiquitin-like protein family. Strongly interacts with the proteasome-associated ATPase ARC through a hydrophobic interface; the interacting region of Pup lies in its C-terminal half. There is one Pup binding site per ARC hexamer ring.

Its pathway is protein degradation; proteasomal Pup-dependent pathway. Functionally, protein modifier that is covalently attached to lysine residues of substrate proteins, thereby targeting them for proteasomal degradation. The tagging system is termed pupylation. The sequence is that of Prokaryotic ubiquitin-like protein Pup from Frankia alni (strain DSM 45986 / CECT 9034 / ACN14a).